The chain runs to 891 residues: DNA mismatch repair protein MutS (891 aa).

Residue 632–639 (GPNMAGKS) participates in ATP binding.

It belongs to the DNA mismatch repair MutS family.

In terms of biological role, this protein is involved in the repair of mismatches in DNA. It is possible that it carries out the mismatch recognition step. This protein has a weak ATPase activity. The sequence is that of DNA mismatch repair protein MutS from Rhodopirellula baltica (strain DSM 10527 / NCIMB 13988 / SH1).